The chain runs to 427 residues: Polyprenol-phosphate-mannose-dependent alpha-(1-2)-phosphatidylinositol mannoside mannosyltransferase (427 aa).

Helical transmembrane passes span 18 to 38 (LWCL…WRLF), 101 to 121 (ASVA…AIVL), 143 to 163 (WLAV…SSNF), 191 to 211 (LMLG…LYFL), 218 to 238 (AALT…VLAW), 279 to 299 (ERFA…IWAM), 308 to 328 (PTLA…VSWS), 331 to 346 (WVWM…LLGW), 351 to 371 (VALA…PIDL), and 386 to 406 (LAGM…GLTV).

This sequence belongs to the glycosyltransferase 87 family.

It localises to the cell membrane. It participates in phospholipid metabolism; phosphatidylinositol metabolism. Responsible for the addition of alpha-(1-2) mannose branches to the linear mannan core on the biosynthetic pathway to mature lipoarabinomannan (LAM). The polypeptide is Polyprenol-phosphate-mannose-dependent alpha-(1-2)-phosphatidylinositol mannoside mannosyltransferase (Mycobacterium tuberculosis (strain ATCC 25618 / H37Rv)).